The sequence spans 410 residues: Translation initiation factor 2 subunit gamma (410 aa).

The tr-type G domain maps to 6–203 (QSEVNIGMVG…AIQEFIPTPE (198 aa)). Residues 15–22 (GHVDHGKT) are G1. Mg(2+)-binding residues include Asp18, Thr22, Gly43, and Ser45. Residue 18 to 23 (DHGKTS) coordinates GTP. The segment at 43 to 47 (GISIR) is G2. 4 residues coordinate Zn(2+): Cys58, Cys61, Cys73, and Cys76. A G3 region spans residues 90-93 (DAPG). Residues 146 to 149 (NKID) and 181 to 183 (SAH) each bind GTP. A G4 region spans residues 146 to 149 (NKID). The segment at 181 to 183 (SAH) is G5.

The protein belongs to the TRAFAC class translation factor GTPase superfamily. Classic translation factor GTPase family. EIF2G subfamily. Heterotrimer composed of an alpha, a beta and a gamma chain. Mg(2+) is required as a cofactor.

It carries out the reaction GTP + H2O = GDP + phosphate + H(+). In terms of biological role, eIF-2 functions in the early steps of protein synthesis by forming a ternary complex with GTP and initiator tRNA. The sequence is that of Translation initiation factor 2 subunit gamma from Methanococcus maripaludis (strain C7 / ATCC BAA-1331).